We begin with the raw amino-acid sequence, 3595 residues long: Replicase polyprotein 1ab (3595 aa).

The segment at Cys-3–Cys-23 adopts a C4-type; atypical zinc-finger fold. In terms of domain architecture, Peptidase C31 spans Ser-56–Gly-164. Active-site for Nsp1-alpha papain-like cysteine proteinase activity residues include Cys-63 and His-130. The region spanning Leu-239–Gly-350 is the Peptidase C32 domain. Active-site for Nsp1-beta papain-like cysteine proteinase activity residues include Cys-246 and His-309. Residues Cys-378 and His-430 each act as for Nsp2 cysteine proteinase activity in the active site. Residues Arg-482–Lys-527 are disordered. Positions Lys-511–Ala-520 are enriched in basic and acidic residues. A Peptidase C33 domain is found at Thr-633–Glu-736. Residues Gln-808 to Pro-862 are disordered. Over residues Asp-851–Arg-860 the composition is skewed to basic and acidic residues. 7 helical membrane-spanning segments follow: residues Met-922–Ile-942, Ile-951–Ser-971, Val-1019–Val-1039, Ile-1239–Val-1259, Pro-1316–Ile-1336, Ala-1345–Ala-1365, and Ala-1381–Leu-1401. An HD1 region spans residues Met-922–Val-1039. Positions Ile-1239 to Trp-1399 are HD2. The 201-residue stretch at Gly-1464 to Glu-1664 folds into the Peptidase S32 domain. Residues His-1502, Asp-1527, and Ser-1580 each act as charge relay system; for 3C-like serine proteinase activity in the active site. Transmembrane regions (helical) follow at residues Ile-1673–Val-1693, Tyr-1711–Ile-1731, Ala-1744–Gly-1764, and Ala-1784–Phe-1804. Positions Leu-1687 to Phe-1804 are HD3. The 171-residue stretch at Asp-2083–Gly-2253 folds into the NiRAN domain. Residues Gly-2491–Phe-2625 form the RdRp catalytic domain. Residues Gly-2746 to Phe-2812 enclose the AV ZBD domain. 12 residues coordinate Zn(2+): Cys-2752, Cys-2755, Cys-2765, Cys-2770, Cys-2773, His-2777, His-2779, Cys-2782, Cys-2789, His-2791, Cys-2798, and Cys-2801. The (+)RNA virus helicase ATP-binding domain occupies Asp-2862–Leu-3022. Gly-2897–Thr-2904 is an ATP binding site. The 135-residue stretch at His-3023 to Asp-3157 folds into the (+)RNA virus helicase C-terminal domain. The region spanning Ser-3196–Val-3292 is the AV-Nsp11N/CoV-Nsp15M domain. Residues Met-3294–Phe-3416 enclose the NendoU domain. Active-site residues include His-3325, His-3340, and Lys-3369.

It belongs to the arteriviridae polyprotein family. In terms of processing, specific enzymatic cleavages in vivo by its own proteases yield mature proteins. There are two alternative pathways for processing. Either nsp4-5 is cleaved, which represents the major pathway or the nsp5-6 and nsp6-7 are processed, which represents the minor pathway. The major pathway occurs when nsp2 acts as a cofactor for nsp4.

It is found in the host membrane. The protein localises to the host cytoplasm. Its subcellular location is the host perinuclear region. The catalysed reaction is RNA(n) + a ribonucleoside 5'-triphosphate = RNA(n+1) + diphosphate. It carries out the reaction ATP + H2O = ADP + phosphate + H(+). It catalyses the reaction uridylyl-uridylyl-ribonucleotide-RNA = a 3'-end uridylyl-2',3'-cyclophospho-uridine-RNA + a 5'-end dephospho-ribonucleoside-RNA. Functionally, the replicase polyprotein 1ab is a multifunctional protein: it contains the activities necessary for the transcription of negative stranded RNA, leader RNA, subgenomic mRNAs and progeny virion RNA as well as proteinases responsible for the cleavage of the polyprotein into functional products. Its function is as follows. The Nsp1 chain is essential for viral subgenomic mRNA synthesis. In terms of biological role, the 3C-like serine proteinase chain is responsible for the majority of cleavages as it cleaves the C-terminus of the polyprotein. Plays a role in viral transcription/replication and prevents the simultaneous activation of host cell dsRNA sensors, such as MDA5/IFIH1, OAS, and PKR. Acts by degrading the 5'-polyuridines generated during replication of the poly(A) region of viral genomic and subgenomic RNAs. Catalyzes a two-step reaction in which a 2'3'-cyclic phosphate (2'3'-cP) is first generated by 2'-O transesterification, which is then hydrolyzed to a 3'-phosphate (3'-P). If not degraded, poly(U) RNA would hybridize with poly(A) RNA tails and activate host dsRNA sensors. Functionally, the helicase chain, which contains a zinc finger structure, displays RNA and DNA duplex-unwinding activities with 5' to 3' polarity. This chain is Replicase polyprotein 1ab (rep), found in Simian hemorrhagic fever virus (SHFV).